We begin with the raw amino-acid sequence, 369 residues long: Cytochrome b561 and DOMON domain-containing protein At3g07570 (369 aa).

Residues 1–22 (MKLYSVSIIIFVLIALSTIVNA) form the signal peptide. The 113-residue stretch at 55–167 (QNFILRYART…PRQSLLYAVG (113 aa)) folds into the DOMON domain. In terms of domain architecture, Cytochrome b561 spans 174–369 (SSPDFRLREH…GLEVRKFLKK (196 aa)). A helical membrane pass occupies residues 212-232 (THGLMNMFGWGILIIVGAIVA). Heme b-binding residues include histidine 213 and histidine 246. 2 helical membrane passes run 247 to 267 (IALQ…GLVL) and 279 to 299 (HKGL…ALLA). Residues histidine 279 and histidine 315 each coordinate heme b. A run of 2 helical transmembrane segments spans residues 321 to 341 (LLII…KAGT) and 343 to 363 (WNGG…GLEV).

Heme b is required as a cofactor.

Its subcellular location is the membrane. May act as a catecholamine-responsive trans-membrane electron transporter. The polypeptide is Cytochrome b561 and DOMON domain-containing protein At3g07570 (Arabidopsis thaliana (Mouse-ear cress)).